A 79-amino-acid polypeptide reads, in one-letter code: uncharacterized protein (79 aa).

This is an uncharacterized protein from Caenorhabditis elegans.